A 229-amino-acid chain; its full sequence is Large ribosomal subunit protein uL1 (229 aa).

Belongs to the universal ribosomal protein uL1 family. In terms of assembly, part of the 50S ribosomal subunit.

Functionally, binds directly to 23S rRNA. The L1 stalk is quite mobile in the ribosome, and is involved in E site tRNA release. Its function is as follows. Protein L1 is also a translational repressor protein, it controls the translation of the L11 operon by binding to its mRNA. The polypeptide is Large ribosomal subunit protein uL1 (Haemophilus influenzae (strain PittEE)).